A 247-amino-acid polypeptide reads, in one-letter code: Probable transcriptional regulatory protein SynWH7803_1972 (247 aa).

This sequence belongs to the TACO1 family.

The protein resides in the cytoplasm. This chain is Probable transcriptional regulatory protein SynWH7803_1972, found in Synechococcus sp. (strain WH7803).